The following is a 1235-amino-acid chain: Phosphorylase b kinase regulatory subunit alpha, liver isoform (1235 aa).

Positions 636-655 (FSPDSEPDLGGYLEDSSPQE) are disordered. 3 positions are modified to phosphoserine: Ser695, Ser729, and Ser735. The interval 807 to 837 (LSELYGKAGLNQEWSLIRYISGLLRKKVEVL) is calmodulin-binding. Residues Ser983, Ser1015, and Ser1044 each carry the phosphoserine modification. A disordered region spans residues 1033 to 1060 (SIKSVRSSTPSSPTGTSSTDSGGQHLGW). Residues 1039–1055 (SSTPSSPTGTSSTDSGG) are compositionally biased toward low complexity. Residues 1059 to 1099 (GWGEQQGQWLRRRRLDGAINRVPVGFYQKVWKILQKCHGLS) are calmodulin-binding. Cys1232 carries S-farnesyl cysteine lipidation.

It belongs to the phosphorylase b kinase regulatory chain family. As to quaternary structure, hexadecamer of 4 heterotetramers, each composed of alpha, beta, gamma, and delta subunits. Alpha (PHKA1 or PHKA2) and beta (PHKB) are regulatory subunits, gamma (PHKG1 or PHKG2) is the catalytic subunit, and delta is calmodulin. Post-translationally, although the final Cys may be farnesylated, the terminal tripeptide is probably not removed, and the C-terminus is not methylated.

Its subcellular location is the cell membrane. Its pathway is glycan biosynthesis; glycogen metabolism. By phosphorylation of various serine residues and by calcium. Functionally, phosphorylase b kinase catalyzes the phosphorylation of serine in certain substrates, including troponin I. The alpha chain may bind calmodulin. In Mus musculus (Mouse), this protein is Phosphorylase b kinase regulatory subunit alpha, liver isoform (Phka2).